The following is a 171-amino-acid chain: Dual specificity protein phosphatase OPG106 (171 aa).

It belongs to the protein-tyrosine phosphatase family. Non-receptor class dual specificity subfamily. As to quaternary structure, homodimer.

The protein localises to the virion. The protein resides in the host cytoplasm. The enzyme catalyses O-phospho-L-tyrosyl-[protein] + H2O = L-tyrosyl-[protein] + phosphate. The catalysed reaction is O-phospho-L-seryl-[protein] + H2O = L-seryl-[protein] + phosphate. In terms of biological role, serine/tyrosine phosphatase which down-regulates cellular antiviral response by dephosphorylating activated host STAT1 and blocking interferon (IFN)-stimulated innate immune responses. Dephosphorylates the OPG144 protein. This is Dual specificity protein phosphatase OPG106 (OPG106) from Monkeypox virus.